The chain runs to 659 residues: Oligopeptide-binding protein AmiA (659 aa).

The N-terminal stretch at Met-1–Ala-22 is a signal peptide. Cys-23 carries the N-palmitoyl cysteine lipid modification. A lipid anchor (S-diacylglycerol cysteine) is attached at Cys-23.

This sequence belongs to the bacterial solute-binding protein 5 family.

It localises to the cell membrane. Its function is as follows. Part of the binding-protein-dependent transport system for oligopeptides; probably an oligopeptide binding protein. In Streptococcus pneumoniae serotype 4 (strain ATCC BAA-334 / TIGR4), this protein is Oligopeptide-binding protein AmiA (amiA).